The chain runs to 452 residues: Rhodopsin (452 aa).

At M1–V33 the chain is on the extracellular side. N-linked (GlcNAc...) asparagine glycosylation is present at N8. A helical transmembrane segment spans residues Y34–L58. Over F59 to N70 the chain is Cytoplasmic. The chain crosses the membrane as a helical span at residues M71–F97. The Extracellular portion of the chain corresponds to M98–K109. A disulfide bridge connects residues C108 and C186. Residues V110–I131 form a helical membrane-spanning segment. A 'Ionic lock' involved in activated form stabilization motif is present at residues D132–Y134. The Cytoplasmic segment spans residues D132 to K151. A helical membrane pass occupies residues A152 to F172. Over G173 to S199 the chain is Extracellular. Residues N200 to V224 form a helical membrane-spanning segment. The Cytoplasmic portion of the chain corresponds to M225–K261. The helical transmembrane segment at I262–L283 threads the bilayer. Over A284–T293 the chain is Extracellular. A helical membrane pass occupies residues P294–Y315. K305 carries the post-translational modification N6-(retinylidene)lysine. Residues S316–A452 are Cytoplasmic-facing. 2 S-palmitoyl cysteine lipidation sites follow: C336 and C337. Disordered stretches follow at residues D346–A365 and M376–A452. The segment covering M376–P388 has biased composition (low complexity). Positions A389–A440 are enriched in pro residues.

This sequence belongs to the G-protein coupled receptor 1 family. Opsin subfamily. Contains one covalently linked retinal chromophore. Upon light absorption, the covalently bound 11-cis-retinal is converted to all-trans-retinal. After hydrolysis of the Schiff base and release of the covalently bound all-trans-retinal, active rhodopsin is regenerated by binding of a fresh molecule of 11-cis-retinal.

Its subcellular location is the cell projection. It is found in the rhabdomere membrane. Its function is as follows. Photoreceptor required for image-forming vision at low light intensity. Light-induced isomerization of 11-cis to all-trans retinal triggers a conformational change that activates signaling via G-proteins. Signaling mediates the activation of phospholipase C. Subsequent receptor phosphorylation mediates displacement of the bound G-protein alpha subunit by arrestin and terminates signaling. The protein is Rhodopsin (RHO) of Loligo forbesii (Veined squid).